The primary structure comprises 78 residues: Beta sliding clamp (78 aa).

The protein belongs to the beta sliding clamp family. Forms a ring-shaped head-to-tail homodimer around DNA which binds and tethers DNA polymerases and other proteins to the DNA. The DNA replisome complex has a single clamp-loading complex (3 tau and 1 each of delta, delta', psi and chi subunits) which binds 3 Pol III cores (1 core on the leading strand and 2 on the lagging strand) each with a beta sliding clamp dimer. Additional proteins in the replisome are other copies of gamma, psi and chi, Ssb, DNA helicase and RNA primase.

It is found in the cytoplasm. Its function is as follows. Confers DNA tethering and processivity to DNA polymerases and other proteins. Acts as a clamp, forming a ring around DNA (a reaction catalyzed by the clamp-loading complex) which diffuses in an ATP-independent manner freely and bidirectionally along dsDNA. Initially characterized for its ability to contact the catalytic subunit of DNA polymerase III (Pol III), a complex, multichain enzyme responsible for most of the replicative synthesis in bacteria; Pol III exhibits 3'-5' exonuclease proofreading activity. The beta chain is required for initiation of replication as well as for processivity of DNA replication. The chain is Beta sliding clamp (dnaN) from Serratia marcescens.